A 534-amino-acid polypeptide reads, in one-letter code: Probable cytochrome c oxidase subunit 1 (534 aa).

The next 8 helical transmembrane spans lie at 35 to 55, 76 to 96, 97 to 117, 120 to 140, 165 to 185, 202 to 222, 254 to 274, and 286 to 306; these read IMYIIFAIFAGVVGGLFSLLF, VLITVHAIIMVFFMIMPALFS, GFGNYFVPLLIGAPDMAFPRL, ISFWLLIPAFLLLISSTFIDG, VAIFSLHLTGLSSILGSINLI, PLFVWSILVTAFLIILAMPVL, LFWFFGHPEVYIVILPGFGIV, and IFGYQGMVGAMVIIGFVGFIV. H81 is a Fe(II)-heme a binding site. Cu cation is bound by residues H260 and Y264. A cross-link (1'-histidyl-3'-tyrosine (His-Tyr)) is located at residues 260-264; the sequence is HPEVY. The Cu cation site is built by H309 and H310. A run of 2 helical transmembrane segments spans residues 320–340 and 357–377; these read ALIYFTAGTMIIAVPTGIKIF and MLFAIGFIILFTIGGVTGIIL. H395 provides a ligand contact to heme a3. A run of 3 helical transmembrane segments spans residues 396–416, 433–453, and 475–495; these read FHYTMSLGALFTAFAGFYYWF, FWITFIGVNLTFFPQHFLGLA, and IGAGISIFAAFYFVFIVFYTL. H397 is a Fe(II)-heme a binding site.

Belongs to the heme-copper respiratory oxidase family.

The protein localises to the cell membrane. It catalyses the reaction 4 Fe(II)-[cytochrome c] + O2 + 8 H(+)(in) = 4 Fe(III)-[cytochrome c] + 2 H2O + 4 H(+)(out). The protein operates within energy metabolism; oxidative phosphorylation. Its function is as follows. Cytochrome c oxidase is the component of the respiratory chain that catalyzes the reduction of oxygen to water. Subunits 1-3 form the functional core of the enzyme complex. CO I is the catalytic subunit of the enzyme. Electrons originating in cytochrome c are transferred via the copper A center of subunit 2 and heme A of subunit 1 to the bimetallic center formed by heme A3 and copper B. The polypeptide is Probable cytochrome c oxidase subunit 1 (ctaD) (Rickettsia prowazekii (strain Madrid E)).